The primary structure comprises 242 residues: Octanoyltransferase (242 aa).

Residues 31–206 form the BPL/LPL catalytic domain; sequence SQTTDEIWFL…LFLKNFGYNQ (176 aa). Residues 70–77, 137–139, and 150–152 each bind substrate; these read RGGQVTYH, SIG, and GLA. The active-site Acyl-thioester intermediate is the Cys168.

Belongs to the LipB family.

The protein localises to the cytoplasm. The catalysed reaction is octanoyl-[ACP] + L-lysyl-[protein] = N(6)-octanoyl-L-lysyl-[protein] + holo-[ACP] + H(+). The protein operates within protein modification; protein lipoylation via endogenous pathway; protein N(6)-(lipoyl)lysine from octanoyl-[acyl-carrier-protein]: step 1/2. Functionally, catalyzes the transfer of endogenously produced octanoic acid from octanoyl-acyl-carrier-protein onto the lipoyl domains of lipoate-dependent enzymes. Lipoyl-ACP can also act as a substrate although octanoyl-ACP is likely to be the physiological substrate. The polypeptide is Octanoyltransferase (Coxiella burnetii (strain Dugway 5J108-111)).